The primary structure comprises 375 residues: Putative F-box/kelch-repeat protein At3g24610 (375 aa).

The segment at 1 to 27 (MSNEAPEVEPHSKRRKKEASPSSSSGF) is disordered. One can recognise an F-box domain in the interval 25-71 (SGFLQSLPEAVAMICLARVSRLDHAALSLVSKSCRSMVLSPELYQTR). A Kelch repeat occupies 138–183 (KINVWGGCKYKHYYDWGEVFDPKTQTWADMSIPKPVREEKIYVVDS).

The polypeptide is Putative F-box/kelch-repeat protein At3g24610 (Arabidopsis thaliana (Mouse-ear cress)).